The primary structure comprises 84 residues: MSILSFLLGEKKKSASVAKERLQIILAHERTGHSAPADYLPALQRELVAVISKYVKIGDQDLRVSLERQDNLEVLEVKIEIPQN.

Belongs to the MinE family.

In terms of biological role, prevents the cell division inhibition by proteins MinC and MinD at internal division sites while permitting inhibition at polar sites. This ensures cell division at the proper site by restricting the formation of a division septum at the midpoint of the long axis of the cell. This chain is Cell division topological specificity factor, found in Cupriavidus necator (strain ATCC 17699 / DSM 428 / KCTC 22496 / NCIMB 10442 / H16 / Stanier 337) (Ralstonia eutropha).